The primary structure comprises 102 residues: NADH-quinone oxidoreductase subunit K (102 aa).

Transmembrane regions (helical) follow at residues 6–26, 30–50, and 62–82; these read LEHG…GLMV, ILFV…AFVV, and VMFI…LAIL.

It belongs to the complex I subunit 4L family. In terms of assembly, NDH-1 is composed of 13 different subunits. Subunits NuoA, H, J, K, L, M, N constitute the membrane sector of the complex.

The protein resides in the cell inner membrane. The enzyme catalyses a quinone + NADH + 5 H(+)(in) = a quinol + NAD(+) + 4 H(+)(out). Its function is as follows. NDH-1 shuttles electrons from NADH, via FMN and iron-sulfur (Fe-S) centers, to quinones in the respiratory chain. The immediate electron acceptor for the enzyme in this species is believed to be ubiquinone. Couples the redox reaction to proton translocation (for every two electrons transferred, four hydrogen ions are translocated across the cytoplasmic membrane), and thus conserves the redox energy in a proton gradient. This Pseudomonas putida (strain ATCC 700007 / DSM 6899 / JCM 31910 / BCRC 17059 / LMG 24140 / F1) protein is NADH-quinone oxidoreductase subunit K.